Reading from the N-terminus, the 267-residue chain is Hydrolase FUB4 (267 aa).

Residues Ser93, Asp183, and His243 each act as charge relay system in the active site.

The protein belongs to the AB hydrolase 3 family.

Its pathway is mycotoxin biosynthesis. Its function is as follows. Hydrolase; part of the gene cluster that mediates the biosynthesis of fusaric acid, a mycotoxin with low to moderate toxicity to animals and humans, but with high phytotoxic properties. L-aspartate is suggested as fusaric acid amino acid precursor that is activated and further processed to O-acetyl-L-homoserine by cluster enzymes aspartate kinase FUB3 and homoserine O-acetyltransferase FUB5, as well as enzymes of the primary metabolism. The polyketide synthase (PKS) FUB1 generates the triketide trans-2-hexenal which is presumptively released by the hydrolase FUB4 and linked to the NRPS-bound amino acid precursor by NAD(P)-dependent dehydrogenase FUB6. FUB1, FUB4, and the non-canonical NRPS Fub8 may form an enzyme complex. Further processing of the NRPS-bound intermediate might be carried out by FUB6 and the sulfhydrylase FUB7, enabling a spontaneous electrocyclization to close the carbon backbone of fusaric acid. Dihydrofusaric acid is likely to be released via reduction by the thioester reductase (TR) domain of FUB8 whereupon the final oxidation to fusaric acid may (also) be performed by the FMN-dependent dehydrogenase FUB9. In Fusarium oxysporum f. sp. lycopersici (strain 4287 / CBS 123668 / FGSC 9935 / NRRL 34936) (Fusarium vascular wilt of tomato), this protein is Hydrolase FUB4.